Here is a 1054-residue protein sequence, read N- to C-terminus: Leucine-rich repeats and immunoglobulin-like domains protein 2 (1054 aa).

An N-terminal signal peptide occupies residues 1–39; it reads MAAAPRGIWEQRRLGCGLGPLARLLILAQALRLLPAARA. The LRRNT domain maps to 40-74; sequence GLCPAPCACRLPLLDCSRRKLPAPSWRALSGPLPS. LRR repeat units follow at residues 75-96, 97-118, 120-141, 144-165, 167-188, 192-213, 215-236, 239-260, 263-284, 287-308, 311-332, 335-356, 359-381, 386-407, and 410-431; these read DISSLDLSHNRLSNWNNTLESQ, TLQEVKMNYNELTEIPYFGEPT, NITLLSLVHNLIPEINAEAFEL, ALESLDLSSNIISEIKTSSFPR, SLKYLNLSNNRISTLEAGCFDN, SLLVVKLNRNRISMIPPKVFKL, HLQFLELKRNRIKIVEGLTFQG, SLRSLKMQRNGISKLKDGAFFG, NMEELELEHNNLTGVNKGWLYG, MLQQLYMSQNAIEKISPDAWEF, RLSELDLSYNQLTRLDESAFVG, LLERLNLGDNRVTHIADGVFRF, NLQTLDLRNNDISWAIEDASEAF, SLTKLILQGNRIKSVTQKAFIG, and SLEYLDLNNNAIMSIQENAFSQ. An N-linked (GlcNAc...) asparagine glycan is attached at Asn-90. Asn-120 is a glycosylation site (N-linked (GlcNAc...) asparagine). Residues Asn-172 and Asn-188 are each glycosylated (N-linked (GlcNAc...) asparagine). A glycan (N-linked (GlcNAc...) asparagine) is linked at Asn-273. N-linked (GlcNAc...) asparagine glycans are attached at residues Asn-440, Asn-467, Asn-513, Asn-570, and Asn-588. The LRRCT domain occupies 442 to 493; it reads SSLLCDCHLKWLLQWLVDNNFHHSVNVSCAHPEWLAGQSILNVDLKDFVCDD. 3 Ig-like C2-type domains span residues 497–596, 601–690, and 695–784; these read PQIR…AKLT, PSFL…ASLT, and PSFI…NVIS. Cys-518 and Cys-579 are disulfide-bonded. Residues Cys-622 and Cys-674 are joined by a disulfide bond. N-linked (GlcNAc...) asparagine glycosylation is found at Asn-686 and Asn-727. Cysteines 716 and 765 form a disulfide. Residues 807–827 form a helical membrane-spanning segment; that stretch reads IVIIVVVCCVVGTSLIWVIVI. The residue at position 905 (Tyr-905) is a Phosphotyrosine. N-linked (GlcNAc...) asparagine glycosylation is present at Asn-1024.

It is found in the cell membrane. Its subcellular location is the cytoplasm. This is Leucine-rich repeats and immunoglobulin-like domains protein 2 (Lrig2) from Mus musculus (Mouse).